We begin with the raw amino-acid sequence, 192 residues long: Probable thymidylate kinase (192 aa).

8-15 (GIDGSGKS) is an ATP binding site.

The protein belongs to the thymidylate kinase family.

The enzyme catalyses dTMP + ATP = dTDP + ADP. This Pyrobaculum aerophilum (strain ATCC 51768 / DSM 7523 / JCM 9630 / CIP 104966 / NBRC 100827 / IM2) protein is Probable thymidylate kinase.